A 203-amino-acid polypeptide reads, in one-letter code: 22.3 kDa class VI heat shock protein (203 aa).

A sHSP domain is found at 86-203; that stretch reads ALRRGARTTV…DAHQAAAATA (118 aa).

Belongs to the small heat shock protein (HSP20) family. In terms of assembly, may form oligomeric structures.

It is found in the cytoplasm. This chain is 22.3 kDa class VI heat shock protein (HSP22.3), found in Oryza sativa subsp. japonica (Rice).